The chain runs to 429 residues: Serine--tRNA ligase (429 aa).

236-238 (TAE) provides a ligand contact to L-serine. ATP is bound at residue 267 to 269 (RSE). Residue glutamate 290 coordinates L-serine. Position 354 to 357 (354 to 357 (EISS)) interacts with ATP. Serine 390 is a binding site for L-serine.

Belongs to the class-II aminoacyl-tRNA synthetase family. Type-1 seryl-tRNA synthetase subfamily. As to quaternary structure, homodimer. The tRNA molecule binds across the dimer.

It is found in the cytoplasm. It catalyses the reaction tRNA(Ser) + L-serine + ATP = L-seryl-tRNA(Ser) + AMP + diphosphate + H(+). The enzyme catalyses tRNA(Sec) + L-serine + ATP = L-seryl-tRNA(Sec) + AMP + diphosphate + H(+). The protein operates within aminoacyl-tRNA biosynthesis; selenocysteinyl-tRNA(Sec) biosynthesis; L-seryl-tRNA(Sec) from L-serine and tRNA(Sec): step 1/1. Catalyzes the attachment of serine to tRNA(Ser). Is also able to aminoacylate tRNA(Sec) with serine, to form the misacylated tRNA L-seryl-tRNA(Sec), which will be further converted into selenocysteinyl-tRNA(Sec). The sequence is that of Serine--tRNA ligase from Alcanivorax borkumensis (strain ATCC 700651 / DSM 11573 / NCIMB 13689 / SK2).